The primary structure comprises 688 residues: Soluble guanylate cyclase gcy-35 (688 aa).

Histidine 105 lines the heme pocket. A coiled-coil region spans residues 358–401; sequence LNQSRMSQVELNRTLEETTKKLKKMAQELEIEKQKTDELLCELM. Residues 424–552 form the Guanylate cyclase domain; that stretch reads TLLFTDIVTF…DTVNVANKME (129 aa). Mg(2+)-binding residues include aspartate 429 and aspartate 473. Residues 644 to 688 are disordered; the sequence is VENGNSAQNNHNNNNNTHHSGRKLMNGSSVDPGSHHIRSPTCTIS. A compositionally biased stretch (low complexity) spans 646–659; the sequence is NGNSAQNNHNNNNN.

The protein belongs to the adenylyl cyclase class-4/guanylyl cyclase family. Heterodimer; heterodimerizes with gcy-36, and possibly with other soluble guanylate cyclases. Heme is required as a cofactor. As to expression, expressed in URX, AQR and PQR neurons. Also expressed in ALN, SDQ and BDU neurons, and variably in AVM, PLM and PLN neurons, pharyngeal and body wall muscles, and the excretory cell.

The protein localises to the cytoplasm. The protein resides in the cell projection. It localises to the dendrite. The enzyme catalyses GTP = 3',5'-cyclic GMP + diphosphate. With respect to regulation, regulated by molecular oxygen, which binds to the heme binding site. Probably not activated by nitric oxide (NO). Its function is as follows. Plays a central role in social feeding behavior and oxygen sensation by synthesizing 3',5'-cyclic guanosine monophosphate (cGMP) from GTP. Oxygen, which binds to its heme-binding sites, probably regulates social behavior by modulating its activity. cGMP is a common second messenger in sensory transduction and is implicated in oxygen sensation. Indeed, C.elegans exhibits a strong behavioral preference for 5-12% oxygen, avoiding higher and lower oxygen levels; a higher level of oxygen inducing a naturally polymorphic social feeding behavior. Involved in avoidance of hyperoxia and for oxygen-induced aggregation and bordering, probably by mediating oxygen-sensing in URX, AQR and PQR sensory neurons. The sequence is that of Soluble guanylate cyclase gcy-35 (gcy-35) from Caenorhabditis elegans.